We begin with the raw amino-acid sequence, 477 residues long: (R)-2-hydroxyglutaryl-CoA dehydratase, subunit alpha (477 aa).

The protein belongs to the FldB/FldC dehydratase alpha/beta subunit family. In terms of assembly, the (R)-2-hydroxyglutaryl-CoA dehydratase enzyme system is a heterodimer composed of an alpha subunit (HgdA) and a beta subunit (HgdB). [4Fe-4S] cluster serves as cofactor. The cofactor is FMN. Requires Mg(2+) as cofactor.

It localises to the cytoplasm. The enzyme catalyses (R)-2-hydroxyglutaryl-CoA = (2E)-glutaconyl-CoA + H2O. It functions in the pathway amino-acid degradation; L-glutamate degradation via hydroxyglutarate pathway; crotonoyl-CoA from L-glutamate: step 4/5. With respect to regulation, activated by the HgdC. Reversibly inactivated by oxidants such as 2-nitrophenol, 3-nitrophenol, 4-nitrophenol, 4-nitrobenzoate, carbonyl cyanide 4-(trifluoromethoxy)phenylhydrazone (FCCP) and chloramphenicol. Irreversibly inactivated by oxidants such as hydroxylamine and nitrite. Involved in the fermentation of L-glutamate via the hydroxyglutarate pathway. Catalyzes the reversible syn-elimination of water from (R)-2-hydroxyglutaryl-CoA to yield (E)-glutaconyl-CoA. The dehydration mechanism involves a transient one electron reduction of the thioester from (R)-2-hydroxyglutaryl-CoA, generating a ketyl radical. Prior to (E)-glutaconyl-CoA formation, the ketyl radical is subsequently reoxidized by electron transfer back to the HgdA-HgdB complex (CompD) to avoid change in oxidation state of the substrate. The appropriate redox state of dehydratase HgdA-HgdB complex (CompD) is maintained by HgdC (CompA) via hydrolysis of ATP and ATP-dependent electron transfer. Since the electron is recycled, the dehydratase is able to perform several turnovers with only catalytic amounts of ATP and substoichiometric amounts of HgdC (CompA). This is (R)-2-hydroxyglutaryl-CoA dehydratase, subunit alpha from Acidaminococcus fermentans (strain ATCC 25085 / DSM 20731 / CCUG 9996 / CIP 106432 / VR4).